We begin with the raw amino-acid sequence, 337 residues long: CMP-N-acetylneuraminate-beta-galactosamide-alpha-2,3-sialyltransferase 1 (337 aa).

The Cytoplasmic portion of the chain corresponds to 1–4 (MRRK). A helical; Signal-anchor for type II membrane protein transmembrane segment spans residues 5–25 (TLKYLTFFLLFIFLTSFVLNY). The Lumenal segment spans residues 26-337 (SNTGVPSAWF…INKIRIFKGR (312 aa)). Disulfide bonds link C56–C61, C58–C136, and C139–C278. N76 carries N-linked (GlcNAc...) asparagine glycosylation. Q102 contacts substrate. N109 carries an N-linked (GlcNAc...) asparagine glycan. Residues N144, N167, Y227, Y263, G267, G287, H296, and H313 each coordinate substrate. N-linked (GlcNAc...) asparagine glycosylation occurs at N320.

Belongs to the glycosyltransferase 29 family. The soluble form derives from the membrane form by proteolytic processing. Highly expressed in submaxillary gland and to a much lesser extent in liver, lung, kidney, heart and brain.

The protein localises to the golgi apparatus. It is found in the golgi stack membrane. The protein resides in the trans-Golgi network membrane. It localises to the secreted. The catalysed reaction is a beta-D-galactosyl-(1-&gt;3)-N-acetyl-alpha-D-galactosaminyl derivative + CMP-N-acetyl-beta-neuraminate = an N-acetyl-alpha-neuraminyl-(2-&gt;3)-beta-D-galactosyl-(1-&gt;3)-N-acetyl-alpha-D-galactosaminyl derivative + CMP + H(+). The enzyme catalyses a ganglioside GM1 (d18:1(4E)) + CMP-N-acetyl-beta-neuraminate = a ganglioside GD1a (d18:1(4E)) + CMP + H(+). It carries out the reaction ganglioside GM1 (d18:1(4E)/18:0) + CMP-N-acetyl-beta-neuraminate = ganglioside GD1a (18:1(4E)/18:0) + CMP + H(+). It catalyses the reaction a ganglioside GA1 + CMP-N-acetyl-beta-neuraminate = a ganglioside GM1b + CMP + H(+). The catalysed reaction is a ganglioside GA1 (d18:1(4E)) + CMP-N-acetyl-beta-neuraminate = a ganglioside GM1b (d18:1(4E)) + CMP + H(+). The enzyme catalyses a ganglioside GD1b + CMP-N-acetyl-beta-neuraminate = a ganglioside GT1b + CMP + H(+). It carries out the reaction a 3-O-[beta-D-galactosyl-(1-&gt;3)-N-acetyl-alpha-D-galactosaminyl]-L-threonyl-[protein] + CMP-N-acetyl-beta-neuraminate = a 3-O-[N-acetyl-alpha-neuraminyl-(2-&gt;3)-beta-D-galactosyl-(1-&gt;3)-N-acetyl-alpha-D-galactosaminyl]-L-threonyl-[protein] + CMP + H(+). It catalyses the reaction a 3-O-[beta-D-galactosyl-(1-&gt;3)-N-acetyl-alpha-D-galactosaminyl]-L-seryl-[protein] + CMP-N-acetyl-beta-neuraminate = 3-O-[N-acetyl-alpha-neuraminyl-(2-&gt;3)-beta-D-galactosyl-(1-&gt;3)-N-acetyl-alpha-D-galactosaminyl]-L-seryl-[protein] + CMP + H(+). The protein operates within protein modification; protein glycosylation. Its pathway is glycolipid biosynthesis. A beta-galactoside alpha2-&gt;3 sialyltransferase involved in terminal sialylation of glycoproteins and glycolipids. Catalyzes the transfer of sialic acid (N-acetyl-neuraminic acid; Neu5Ac) from the nucleotide sugar donor CMP-Neu5Ac onto acceptor Galbeta-(1-&gt;3)-GalNAc-terminated glycoconjugates through an alpha2-3 linkage. Adds sialic acid to the core 1 O-glycan, Galbeta-(1-&gt;3)-GalNAc-O-Ser/Thr, which is a major structure of mucin-type O-glycans. As part of a homeostatic mechanism that regulates CD8-positive T cell numbers, sialylates core 1 O-glycans of T cell glycoproteins, SPN/CD43 and PTPRC/CD45. Prevents premature apoptosis of thymic CD8-positive T cells prior to peripheral emigration, whereas in the secondary lymphoid organs controls the survival of CD8-positive memory T cells generated following a successful immune response. Transfers sialic acid to asialofetuin, presumably onto Galbeta-(1-&gt;3)-GalNAc-O-Ser. Sialylates GM1a, GA1 and GD1b gangliosides to form GD1a, GM1b and GT1b, respectively. This chain is CMP-N-acetylneuraminate-beta-galactosamide-alpha-2,3-sialyltransferase 1 (St3gal1), found in Mus musculus (Mouse).